We begin with the raw amino-acid sequence, 456 residues long: 5-hydroxytryptamine receptor 3E (456 aa).

The first 25 residues, 1-25 (MEGSWFHRKRFSFYLLLGFLLQGRG), serve as a signal peptide directing secretion. The Extracellular segment spans residues 26–248 (VTFTINCSGF…FYVAIRRRPS (223 aa)). A disulfide bridge connects residues Cys-162 and Cys-176. Asn-175 carries N-linked (GlcNAc...) asparagine glycosylation. A helical transmembrane segment spans residues 249 to 269 (LYVINLLVPSGFLVAIDALSF). At 270 to 282 (YLPVKSGNRVPFK) the chain is on the cytoplasmic side. Residues 283–303 (ITLLLGYNVFLLMMSDLLPTS) form a helical membrane-spanning segment. At 304 to 307 (GTPL) the chain is on the extracellular side. A helical transmembrane segment spans residues 308–328 (IGVYFALCLSLMVGSLLETIF). Topologically, residues 329 to 433 (ITHLLHVATT…WLQFSHAMDA (105 aa)) are cytoplasmic. The segment at 401-432 (TGGSEWTRAQREHEAQKQHSVELWLQFSHAMD) is HA-stretch; determines single-channel conductance in 5-HT3 receptors. A helical membrane pass occupies residues 434 to 454 (MLFRLYLLFMASSIITVICLW). The Extracellular portion of the chain corresponds to 455–456 (NT).

It belongs to the ligand-gated ion channel (TC 1.A.9) family. 5-hydroxytryptamine receptor (TC 1.A.9.2) subfamily. HTR3E sub-subfamily. In terms of assembly, forms homopentameric as well as heteropentameric serotonin-activated cation-selective channel complexes with HTR3A. The homomeric complex is not functional. Heteropentameric complexes display properties which resemble that of neuronal serotonin-activated channels in vivo. As to expression, expressed in adult colon and intestine.

The protein localises to the postsynaptic cell membrane. It is found in the cell membrane. The enzyme catalyses Na(+)(in) = Na(+)(out). It catalyses the reaction K(+)(in) = K(+)(out). The catalysed reaction is Ca(2+)(in) = Ca(2+)(out). Functionally, forms serotonin (5-hydroxytryptamine/5-HT3)-activated cation-selective channel complexes, which when activated cause fast, depolarizing responses in neurons. The polypeptide is 5-hydroxytryptamine receptor 3E (Homo sapiens (Human)).